The sequence spans 415 residues: Zinc finger protein ZFMSA12A (415 aa).

The segment at 1 to 36 is disordered; that stretch reads MGIQDARWPSEDEETHLLDSSSAEQTRGEKCSDSTP. 12 consecutive C2H2-type zinc fingers follow at residues 78 to 100, 106 to 129, 134 to 156, 161 to 183, 189 to 211, 217 to 239, 245 to 267, 273 to 295, 301 to 323, 329 to 351, 357 to 379, and 385 to 407; these read HKCTQCGKCFIYRYELLEHQRLH, YRCSQCGKAFRRTSDLSSHRRTQC, YICIKCGNSFQSIQEKFRHQCVH, FDCSQCGKSFKKMHLLGKHELTH, FTCRQCGKVYPGMSELRSHQKIH, NQCMQCGKFFSSSACLTAHEVRH, QICARCGKAFKNKHDLNLHMRSH, FQCTYCGKRFSVSGNLNIHVRTH, YLCSDCGKAFISAGELQIHRRTH, YKCSVCGRGFTMASKVTLHMRVH, YVCSECGKGFSRGSELKKHSMNH, and YACQLCAKTYTCLNHLKRHLKTH.

The protein localises to the nucleus. This Micropterus salmoides (Largemouth bass) protein is Zinc finger protein ZFMSA12A.